A 275-amino-acid chain; its full sequence is MVHDLLRDRADLEARWNPSAYMQFARLRQRPVVELLDHIEPCCPERIYDLGCGTGIATELLARRWPLAELYGVDSSVEMLEEAARLPIKASWERANLRHWCAERPASLLFAAAVLHFLEDHGKLLPRLLGQLTPGGCLAAHMPNWRDASWYRLMLDALDSAGPGGASLGSPALRYRLHRRNVLSLDNYYRLLAPLTAELDIWETEYLQVVDGNDPIFDWIKVSALRPVLGELDEEARRRFLDRYLELLHRHYPRELDGRTLFPFRRVFIVASLGR.

Belongs to the methyltransferase superfamily. Tam family.

Its subcellular location is the cytoplasm. The enzyme catalyses trans-aconitate + S-adenosyl-L-methionine = (E)-3-(methoxycarbonyl)pent-2-enedioate + S-adenosyl-L-homocysteine. Catalyzes the S-adenosylmethionine monomethyl esterification of trans-aconitate. The polypeptide is Trans-aconitate 2-methyltransferase (Pseudomonas aeruginosa (strain ATCC 15692 / DSM 22644 / CIP 104116 / JCM 14847 / LMG 12228 / 1C / PRS 101 / PAO1)).